The sequence spans 512 residues: MGLCSSSSARRDAGTPGGGNGAGNKDNAGRKGIVACGKRTDFGYDKDFEARYALGKLLGHGQFGYTFAAVDRRSSERVAVKRIDKNKMVLPVAVEDVKREVKILKALQGHENVVHFYNAFEDDNYVYIVMELCEGGELLDRILAKKDSRYSEKDAAVVVRQMLKVAAECHLHGLVHRDMKPENFLFKSTKEDSSLKATDFGLSDFIRPGKHFRDIVGSAYYVAPEVLKRKSGPESDVWSIGVITYILLCGRRPFWDKTEDGIFKEVLKNKPDFRRKPWPNITPCAKDFVQKLLVKDPRARLTAAQALSHEWVREGGQASDIPLDISVLHNMRQFVKYSRFKQFALRALASTLNAEELSDLRDQFNAIDVDKNGTISLEELKQALAKDVPWRLKGPRVLEIVEAIDSNTDGLVDFEEFVAATLHVHQLVEHDTEKWKSLSQAAFDKFDVDGDGYITSDELRMQTGLKGSIDPLLEEADIDRDGKISLDEFRRLLKTASMSSRNVQTPRSVHRS.

The disordered stretch occupies residues 1–25 (MGLCSSSSARRDAGTPGGGNGAGNK). G2 carries N-myristoyl glycine lipidation. The region spanning 52 to 312 (YALGKLLGHG…AAQALSHEWV (261 aa)) is the Protein kinase domain. ATP contacts are provided by residues 58 to 66 (LGHGQFGYT) and K81. D178 (proton acceptor) is an active-site residue. Residues 318–348 (ASDIPLDISVLHNMRQFVKYSRFKQFALRAL) are autoinhibitory domain. EF-hand domains follow at residues 355–390 (EELS…DVPW), 392–427 (LKGP…VHQL), 434–469 (KWKS…KGSI), and 472–499 (LLEE…ASMS). Positions 368, 370, 372, 374, 379, 405, 407, 409, 416, 447, 449, 451, 453, 458, 477, 479, 481, 483, and 488 each coordinate Ca(2+).

It belongs to the protein kinase superfamily. Ser/Thr protein kinase family. CDPK subfamily. As to quaternary structure, interacts with MPK5. In terms of processing, autophosphorylated. Phosphorylated by MPK5.

It is found in the cell membrane. The catalysed reaction is L-seryl-[protein] + ATP = O-phospho-L-seryl-[protein] + ADP + H(+). It catalyses the reaction L-threonyl-[protein] + ATP = O-phospho-L-threonyl-[protein] + ADP + H(+). Its activity is regulated as follows. Activated by calcium. Autophosphorylation may play an important role in the regulation of the kinase activity. Functionally, may play a role in signal transduction pathways that involve calcium as a second messenger. Functions upstream of MPK5 in a signaling pathway that represses defense gene expression and negatively regulates resistance to rice blast fungus. Phosphorylates MPK5 at Thr-14 and Thr-32 and activates MPK5 independently of MAP kinase kinase (MKK) phosphorylation. May be involved in arbuscular mycorrhizal presymbiotic phase signaling. Phosphorylates the elicitor-responsive protein ERG1 in vitro. Phosphorylation is calcium-dependent. This is Calcium-dependent protein kinase 18 from Oryza sativa subsp. japonica (Rice).